A 435-amino-acid polypeptide reads, in one-letter code: ATP-dependent protease ATPase subunit HslU (435 aa).

ATP contacts are provided by residues I18, 60–65, D248, E313, and R385; that span reads GVGKTE.

The protein belongs to the ClpX chaperone family. HslU subfamily. As to quaternary structure, a double ring-shaped homohexamer of HslV is capped on each side by a ring-shaped HslU homohexamer. The assembly of the HslU/HslV complex is dependent on binding of ATP.

Its subcellular location is the cytoplasm. Its function is as follows. ATPase subunit of a proteasome-like degradation complex; this subunit has chaperone activity. The binding of ATP and its subsequent hydrolysis by HslU are essential for unfolding of protein substrates subsequently hydrolyzed by HslV. HslU recognizes the N-terminal part of its protein substrates and unfolds these before they are guided to HslV for hydrolysis. This chain is ATP-dependent protease ATPase subunit HslU, found in Rhizobium etli (strain ATCC 51251 / DSM 11541 / JCM 21823 / NBRC 15573 / CFN 42).